Consider the following 109-residue polypeptide: ATP-dependent Clp protease adapter protein ClpS (109 aa).

A disordered region spans residues 1–23; sequence MTERKHDDTGVEEGTGLATKTRP.

It belongs to the ClpS family. Binds to the N-terminal domain of the chaperone ClpA.

Involved in the modulation of the specificity of the ClpAP-mediated ATP-dependent protein degradation. In Maricaulis maris (strain MCS10) (Caulobacter maris), this protein is ATP-dependent Clp protease adapter protein ClpS.